A 254-amino-acid chain; its full sequence is Metallo-beta-lactamase type 2 (254 aa).

A signal peptide spans 1–27 (MMKGWMKCGLAGAVVLMASFWGGSVRA). Aspartate 99 contacts Zn(2+). The substrate site is built by threonine 135 and histidine 174. Cysteine 193 lines the Zn(2+) pocket. Positions 196 and 201 each coordinate substrate. Histidine 231 is a Zn(2+) binding site.

This sequence belongs to the metallo-beta-lactamase superfamily. Class-B beta-lactamase family. In terms of assembly, monomer. It depends on Zn(2+) as a cofactor.

Its subcellular location is the periplasm. It carries out the reaction a beta-lactam + H2O = a substituted beta-amino acid. Competitively inhibited by mercaptophosphonate and pyridine carboxylate derivatives. Also inhibited by the binding of a second zinc ion and by chelating agents such as EDTA. Confers resistance to the different beta-lactams antibiotics (penicillin, cephalosporin and carbapenem) via the hydrolysis of the beta-lactam ring. It is able to hydrolyze penicillin and imipenem, but is much less active against cephalothin, cefotaxime, meropenem and ceftazidime. The protein is Metallo-beta-lactamase type 2 of Aeromonas hydrophila.